The sequence spans 94 residues: Alpha-conotoxin Cp20.3 (94 aa).

An N-terminal signal peptide occupies residues M1–G24. Positions Q25–R45 are excised as a propeptide. E46 is modified (4-carboxyglutamate; partial). E49 is subject to 4-carboxyglutamate. P55 carries the 4-hydroxyproline modification. Cystine bridges form between C63/C72, C68/C80, C73/C90, and C78/C92.

The protein belongs to the conotoxin D superfamily. Hetero-, homo- or pseudo-homodimer (identical sequence, different post-translational modifications). As to expression, expressed by the venom duct.

It localises to the secreted. Its function is as follows. Alpha-D-conopeptides act on postsynaptic membranes, they bind to the nicotinic acetylcholine receptors (nAChR) and thus inhibit them. Through its two C-terminal domains, this homodimeric protein would bind to two nAChR allosteric sites, located outside the nAChR C-loop of the principal binding face and at the adjacent binding interface in a clockwise direction. This toxin specifically blocks mammalian neuronal nAChR of the alpha-7/CHRNA7 (IC(50)=0.25 nM), alpha-3-beta-2/CHRNA3-CHRNB2 (IC(50)=2.8 nM), and alpha-4-beta-2/CHRNA4-CHRNB2 (IC(50)=28.6 nM) subtypes. Has no effect on alpha-3-beta-4/CHRNA3-CHRNB4, alpha-4-beta-4/CHRNA4-CHRNB4 and alpha-1-beta-1-epsilon-delta/CHRNA1-CHRNB1-CHRNE-CHRND subtypes of nAChRs. The polypeptide is Alpha-conotoxin Cp20.3 (Conus capitaneus (Captain cone)).